The sequence spans 620 residues: Chaperone protein HtpG (620 aa).

An a; substrate-binding region spans residues Met1 to Arg334. A b region spans residues Glu335–Arg548. Residues Met549 to Leu620 are c.

This sequence belongs to the heat shock protein 90 family. In terms of assembly, homodimer.

The protein localises to the cytoplasm. Its function is as follows. Molecular chaperone. Has ATPase activity. This Rhodopseudomonas palustris (strain BisA53) protein is Chaperone protein HtpG.